The primary structure comprises 367 residues: UDP-N-acetylglucosamine--N-acetylmuramyl-(pentapeptide) pyrophosphoryl-undecaprenol N-acetylglucosamine transferase (367 aa).

Residues 15-17 (TGG), asparagine 127, arginine 163, serine 191, isoleucine 249, and glutamine 294 each bind UDP-N-acetyl-alpha-D-glucosamine.

It belongs to the glycosyltransferase 28 family. MurG subfamily.

It is found in the cell inner membrane. It catalyses the reaction di-trans,octa-cis-undecaprenyl diphospho-N-acetyl-alpha-D-muramoyl-L-alanyl-D-glutamyl-meso-2,6-diaminopimeloyl-D-alanyl-D-alanine + UDP-N-acetyl-alpha-D-glucosamine = di-trans,octa-cis-undecaprenyl diphospho-[N-acetyl-alpha-D-glucosaminyl-(1-&gt;4)]-N-acetyl-alpha-D-muramoyl-L-alanyl-D-glutamyl-meso-2,6-diaminopimeloyl-D-alanyl-D-alanine + UDP + H(+). Its pathway is cell wall biogenesis; peptidoglycan biosynthesis. Its function is as follows. Cell wall formation. Catalyzes the transfer of a GlcNAc subunit on undecaprenyl-pyrophosphoryl-MurNAc-pentapeptide (lipid intermediate I) to form undecaprenyl-pyrophosphoryl-MurNAc-(pentapeptide)GlcNAc (lipid intermediate II). This is UDP-N-acetylglucosamine--N-acetylmuramyl-(pentapeptide) pyrophosphoryl-undecaprenol N-acetylglucosamine transferase from Burkholderia vietnamiensis (strain G4 / LMG 22486) (Burkholderia cepacia (strain R1808)).